A 69-amino-acid polypeptide reads, in one-letter code: Large ribosomal subunit protein bL31 (69 aa).

Zn(2+)-binding residues include cysteine 16, cysteine 18, cysteine 36, and cysteine 39.

Belongs to the bacterial ribosomal protein bL31 family. Type A subfamily. As to quaternary structure, part of the 50S ribosomal subunit. Requires Zn(2+) as cofactor.

Binds the 23S rRNA. The polypeptide is Large ribosomal subunit protein bL31 (Thermosipho africanus (strain TCF52B)).